Reading from the N-terminus, the 507-residue chain is MTMTHQQDLKGVFTAKDLDFKPAGKITKKDLNTGVTKAEYAVRGAIPTRADELKEELKKNPEVLPFDDIINANIGNPQQLDQKPLTFTRQVLAILEYPEILRVGHNELASLNLFSRDALERAERLLNDIGGSIGAYSHSQGVPGIRQTVADFITRRDGGEPATPEDIYLTTGASSAATSLLSLLCKDSQTGLLIPIPQYPLYTASASLFNAQVLPYYLDEESNWSTNSDEIEKVVQDALKKQIRPSVLIVINPGNPTGAVLSEETIARICLIAAKYGITIISDEVYQENIFNDVKFHSMKKVLRKLQHLYPGKFDNVQLASLHSISKGFMDECGQRGGYMEIIGFSQEIRDALFKLMSISICSVVTGQAVVDLMVKPPQPGDESYEQDHDERLKIFHEMRTRANLLYETFKELEGIECQKPQGAMYLFPRLVLPKKALCESERLGIEPDEFYCTSLLESTGICTVPGSGFGQRPGTYHVRTTFLAPGTKWIQDWKEFHQDFFSKYRN.

Positions 173, 174, 199, 255, and 324 each coordinate pyridoxal 5'-phosphate. Lys-327 carries the post-translational modification N6-(pyridoxal phosphate)lysine. Arg-336 is a binding site for pyridoxal 5'-phosphate.

This sequence belongs to the class-I pyridoxal-phosphate-dependent aminotransferase family. Alanine aminotransferase subfamily. As to quaternary structure, homodimer. Requires pyridoxal 5'-phosphate as cofactor.

Its subcellular location is the cytoplasm. It localises to the nucleus. In terms of biological role, inactive alanine aminotransferase. Forms a catalytically active Schiff base with PLP, but lacks alanine transaminase activity, probably due to an altered structural conformation of the dimeric enzyme. This suggests this protein may have a yet undiscovered physiological function. The protein is Inactive alanine aminotransferase (ALT2) of Saccharomyces cerevisiae (strain ATCC 204508 / S288c) (Baker's yeast).